The chain runs to 398 residues: Putative glutamate--cysteine ligase 2 (398 aa).

This sequence belongs to the glutamate--cysteine ligase type 2 family. YbdK subfamily.

The enzyme catalyses L-cysteine + L-glutamate + ATP = gamma-L-glutamyl-L-cysteine + ADP + phosphate + H(+). Functionally, ATP-dependent carboxylate-amine ligase which exhibits weak glutamate--cysteine ligase activity. This is Putative glutamate--cysteine ligase 2 from Micrococcus luteus (strain ATCC 4698 / DSM 20030 / JCM 1464 / CCM 169 / CCUG 5858 / IAM 1056 / NBRC 3333 / NCIMB 9278 / NCTC 2665 / VKM Ac-2230) (Micrococcus lysodeikticus).